Here is a 53-residue protein sequence, read N- to C-terminus: uncharacterized protein (53 aa).

The helical transmembrane segment at 28–45 threads the bilayer; that stretch reads AIVFSLAVFGIVEAYYYW.

The protein localises to the host membrane. This is an uncharacterized protein from Acidianus convivator (ABV).